We begin with the raw amino-acid sequence, 654 residues long: Translation factor GUF1, mitochondrial (654 aa).

A tr-type G domain is found at 57 to 237 (ENYRNFSIVA…SVIKNIPSPV (181 aa)). GTP contacts are provided by residues 66 to 73 (AHVDHGKS), 130 to 134 (DTPGH), and 184 to 187 (NKID).

The protein belongs to the TRAFAC class translation factor GTPase superfamily. Classic translation factor GTPase family. LepA subfamily.

It localises to the mitochondrion inner membrane. It carries out the reaction GTP + H2O = GDP + phosphate + H(+). Functionally, promotes mitochondrial protein synthesis. May act as a fidelity factor of the translation reaction, by catalyzing a one-codon backward translocation of tRNAs on improperly translocated ribosomes. Binds to mitochondrial ribosomes in a GTP-dependent manner. The chain is Translation factor GUF1, mitochondrial from Candida albicans (strain SC5314 / ATCC MYA-2876) (Yeast).